Here is an 882-residue protein sequence, read N- to C-terminus: Nitrogen regulatory protein areA (882 aa).

Positions 1–13 (MSGLTLGGGGSGG) are enriched in gly residues. Disordered stretches follow at residues 1-75 (MSGL…PDSL), 139-191 (KRKE…LTSD), 228-257 (SRKD…SEFG), 325-344 (NNHS…FGLD), 394-422 (STDF…EHSM), 461-545 (NQDQ…DMNG), and 579-675 (MDTP…GPTT). Over residues 48 to 59 (SDFSQLSDDFSF) the composition is skewed to low complexity. Polar residues-rich tracts occupy residues 156-169 (NSVS…QLTS) and 177-191 (PTRQ…LTSD). The segment covering 325–334 (NNHSSSHHNH) has biased composition (basic residues). Polar residues-rich tracts occupy residues 394 to 413 (STDF…STPQ) and 492 to 503 (QVLNPNDFSTGA). The span at 604 to 613 (VRNREQDPRR) shows a compositional bias: basic and acidic residues. The span at 617–642 (ARTTSTPNTAQLLRQSMNANTSHTSP) shows a compositional bias: polar residues. The GATA-type zinc finger occupies 676–700 (CTNCFTQTTPLWRRNPEGQPLCNAC). Positions 723–871 (RNRSSANSLA…NHSIAGGQGA (149 aa)) are disordered. A compositionally biased stretch (low complexity) spans 745-759 (KNSVQQTTVTTPTSS). Residues 795–811 (NPTTSSPGQSRGTSSVQ) show a composition bias toward polar residues. The span at 848 to 861 (ALAPAMPPAAANPA) shows a compositional bias: low complexity.

It localises to the nucleus. Major nitrogen regulatory protein. Positively acting regulatory gene of nitrogen metabolite repression. In Aspergillus niger, this protein is Nitrogen regulatory protein areA (areA).